The chain runs to 185 residues: Dioxygenase easH (185 aa).

Fe cation is bound by residues H17, D19, and H93.

This sequence belongs to the PhyH family. In terms of assembly, homodimer. Fe cation serves as cofactor.

It participates in alkaloid biosynthesis; ergot alkaloid biosynthesis. Dioxygenase; part of the gene cluster that mediates the biosynthesis of fungal ergot alkaloid ergovaline, the predominant ergopeptine product in E.festucae var. lolii. DmaW catalyzes the first step of ergot alkaloid biosynthesis by condensing dimethylallyl diphosphate (DMAP) and tryptophan to form 4-dimethylallyl-L-tryptophan. The second step is catalyzed by the methyltransferase easF that methylates 4-dimethylallyl-L-tryptophan in the presence of S-adenosyl-L-methionine, resulting in the formation of 4-dimethylallyl-L-abrine. The catalase easC and the FAD-dependent oxidoreductase easE then transform 4-dimethylallyl-L-abrine to chanoclavine-I which is further oxidized by easD in the presence of NAD(+), resulting in the formation of chanoclavine-I aldehyde. Agroclavine dehydrogenase easG then mediates the conversion of chanoclavine-I aldehyde to agroclavine via a non-enzymatic adduct reaction: the substrate is an iminium intermediate that is formed spontaneously from chanoclavine-I aldehyde in the presence of glutathione. The presence of easA is not required to complete this reaction. Further conversion of agroclavine to paspalic acid is a two-step process involving oxidation of agroclavine to elymoclavine and of elymoclavine to paspalic acid, the second step being performed by the elymoclavine oxidase cloA. Paspalic acid is then further converted to D-lysergic acid. Ergovaline is assembled from D-lysergic acid and three different amino acids by the D-lysergyl-peptide-synthetase composed of a monomudular (lpsB) and a trimodular (lpsA) nonribosomal peptide synthetase subunit. The protein is Dioxygenase easH of Epichloe festucae var. lolii (Neotyphodium lolii).